A 100-amino-acid chain; its full sequence is Small ribosomal subunit protein uS14c (100 aa).

Residues Met1 to Ile31 are disordered.

The protein belongs to the universal ribosomal protein uS14 family. Part of the 30S ribosomal subunit.

The protein localises to the plastid. It is found in the chloroplast. Binds 16S rRNA, required for the assembly of 30S particles. In Atropa belladonna (Belladonna), this protein is Small ribosomal subunit protein uS14c.